The sequence spans 84 residues: Toxin-like TcoNTxP1 (84 aa).

Positions 1-19 (MKRMILFTSCLLLIDIVVG) are cleaved as a signal peptide. One can recognise an LCN-type CS-alpha/beta domain in the interval 21-82 (KEGYPADSKG…VWDSATNKCG (62 aa)). 4 cysteine pairs are disulfide-bonded: Cys-31/Cys-81, Cys-35/Cys-57, Cys-43/Cys-62, and Cys-47/Cys-64. A Cysteine amide modification is found at Cys-81. The propeptide occupies 82 to 84 (GKK).

In terms of tissue distribution, expressed by the venom gland.

It is found in the secreted. This protein is not toxic. It induces an immune response similar to that induced by whole venom. Thus, polyclonal antibodies raised against this protein can neutralize the effects of the venom. The sequence is that of Toxin-like TcoNTxP1 from Tityus costatus (Brazilian scorpion).